Reading from the N-terminus, the 1001-residue chain is 26S proteasome non-ATPase regulatory subunit 1 homolog B (1001 aa).

Residue alanine 2 is modified to N-acetylalanine. A Glycyl lysine isopeptide (Lys-Gly) (interchain with G-Cter in ubiquitin) cross-link involves residue lysine 166. PC repeat units follow at residues 412–447 (SATAGLGVIHRGHLQQGRSLMAPYLPQGGAGGGGSP), 452–485 (GALYALGLIHANHGEGIKQFLRDSLRSTSVEVIQ), 487–521 (GACLGLGLAALGTADEDIYDDIKSVLYTDSAVAGE), 522–555 (AAGISMGLLLVGTATDKASEMLAYAHETQHEKII), 557–590 (GLALGIALTVYGREEGADTLIEQMTRDQDPIIRY), 591–626 (GGMYALALAYSGTANNKAIRQLLHFAVSDVSDDVRR), 627–659 (TAVLALGFVLYSDPEQTPRIVSLLSESYNPHVR), 661–695 (GAALAVGISCAGTGLSEAISLLEPLTSDVVDFVRQ), 696–736 (GALI…DTMS), and 739–771 (GAILASGILDAGGRNVTIRLLSKTKHDKVTAVI). Disordered stretches follow at residues 853–896 (AKKE…TVEK) and 954–1001 (SLTD…YASP). The span at 854–863 (KKEAEQKAKA) shows a compositional bias: basic and acidic residues. At serine 889 the chain carries Phosphoserine. A compositionally biased stretch (low complexity) spans 961–985 (STASPAVGAEAAGQAQQAATTSAMA).

The protein belongs to the proteasome subunit S1 family. As to quaternary structure, component of the 19S regulatory particle (RP/PA700) base subcomplex of the 26S proteasome. The 26S proteasome is composed of a core protease (CP), known as the 20S proteasome, capped at one or both ends by the 19S regulatory particle (RP/PA700). The RP/PA700 complex is composed of at least 17 different subunits in two subcomplexes, the base and the lid, which form the portions proximal and distal to the 20S proteolytic core, respectively.

Functionally, acts as a regulatory subunit of the 26 proteasome which is involved in the ATP-dependent degradation of ubiquitinated proteins. The polypeptide is 26S proteasome non-ATPase regulatory subunit 1 homolog B (RPN2B) (Arabidopsis thaliana (Mouse-ear cress)).